The following is a 144-amino-acid chain: Cell division protein SepF (144 aa).

The disordered stretch occupies residues 16-42; it reads DEMNEAPYTEAEQQEEEVPQAQKNERR.

Belongs to the SepF family. In terms of assembly, homodimer. Interacts with FtsZ.

It localises to the cytoplasm. In terms of biological role, cell division protein that is part of the divisome complex and is recruited early to the Z-ring. Probably stimulates Z-ring formation, perhaps through the cross-linking of FtsZ protofilaments. Its function overlaps with FtsA. The polypeptide is Cell division protein SepF (Lactobacillus gasseri (strain ATCC 33323 / DSM 20243 / BCRC 14619 / CIP 102991 / JCM 1131 / KCTC 3163 / NCIMB 11718 / NCTC 13722 / AM63)).